A 501-amino-acid chain; its full sequence is Beta-secretase 1 (501 aa).

The signal sequence occupies residues 1–21 (MAQALPWLLLWMGAGVLPAHG). The propeptide occupies 22-45 (TQHGIRLPLRSGLGGAPLGLRLPR). At 22-457 (TQHGIRLPLR…PQTDESTLMT (436 aa)) the chain is on the extracellular side. Residues 39–58 (LGLRLPRETDEEPEEPGRRG) form a disordered region. The 342-residue stretch at 75-416 (YYVEMTVGSP…DRARKRIGFA (342 aa)) folds into the Peptidase A1 domain. Asp93 is an active-site residue. Position 126 is an N6-acetyllysine (Lys126). Residues Asn153, Asn172, and Asn223 are each glycosylated (N-linked (GlcNAc...) asparagine). 3 disulfide bridges follow: Cys216-Cys420, Cys278-Cys443, and Cys330-Cys380. 3 positions are modified to N6-acetyllysine: Lys275, Lys279, and Lys285. Asp289 is an active-site residue. Residues Lys299, Lys300, and Lys307 each carry the N6-acetyllysine modification. Asn354 is a glycosylation site (N-linked (GlcNAc...) asparagine). Residues 458–478 (IAYVMAAICALFMLPLCLMVC) form a helical membrane-spanning segment. S-palmitoyl cysteine attachment occurs at residues Cys474, Cys478, Cys482, and Cys485. Residues 479 to 501 (QWRCLRCLRQQHDDFADDISLLK) lie on the Cytoplasmic side of the membrane. The interaction with RTN3 stretch occupies residues 479–501 (QWRCLRCLRQQHDDFADDISLLK). The DXXLL motif lies at 496-500 (DISLL). At Ser498 the chain carries Phosphoserine. A Glycyl lysine isopeptide (Lys-Gly) (interchain with G-Cter in ubiquitin) cross-link involves residue Lys501.

Belongs to the peptidase A1 family. As to quaternary structure, monomer. Interacts (via DXXLL motif) with GGA1, GGA2 and GGA3 (via their VHS domain); the interaction highly increases when BACE1 is phosphorylated at Ser-498. Interacts with RTN1; RTN2; RTN3 and RTN4; the interaction leads to inhibition of amyloid precursor protein processing. Interacts with SNX6. Interacts with PCSK9. Interacts with NAT8 and NAT8B. Interacts with BIN1. Interacts (via extracellular domain) with ADAM10 (via extracellular domain). Interacts with SORL1; this interaction may affect binding with APP and hence reduce APP cleavage. Interacts with NRDC AND NRG1. In terms of processing, N-Glycosylated. Addition of a bisecting N-acetylglucosamine by MGAT3 blocks lysosomal targeting, further degradation and is required for maintaining stability under stress conditions. Post-translationally, acetylated in the endoplasmic reticulum at Lys-126, Lys-275, Lys-279, Lys-285, Lys-299, Lys-300 and Lys-307. Acetylation by NAT8 and NAT8B is transient and deacetylation probably occurs in the Golgi. Acetylation regulates the maturation, the transport to the plasma membrane, the stability and the expression of the protein. Palmitoylation mediates lipid raft localization. In terms of processing, ubiquitinated at Lys-501, ubiquitination leads to lysosomal degradation. Monoubiquitinated and 'Lys-63'-linked polyubitinated. Deubiquitnated by USP8; inhibits lysosomal degradation. Post-translationally, phosphorylation at Ser-498 is required for interaction with GGA1 and retrograded transport from endosomal compartments to the trans-Golgi network. Non-phosphorylated BACE1 enters a direct recycling route to the cell surface. As to expression, expressed at high levels in the brain and pancreas. In the brain, expression is highest in the substantia nigra, locus coruleus and medulla oblongata.

The protein resides in the cell membrane. The protein localises to the golgi apparatus. Its subcellular location is the trans-Golgi network. It is found in the endoplasmic reticulum. It localises to the endosome. The protein resides in the cell surface. The protein localises to the cytoplasmic vesicle membrane. Its subcellular location is the membrane raft. It is found in the lysosome. It localises to the late endosome. The protein resides in the early endosome. The protein localises to the recycling endosome. Its subcellular location is the cell projection. It is found in the axon. It localises to the dendrite. The enzyme catalyses Broad endopeptidase specificity. Cleaves Glu-Val-Asn-Leu-|-Asp-Ala-Glu-Phe in the Swedish variant of Alzheimer's amyloid precursor protein.. With respect to regulation, inhibited by RTN3 and RTN4. Its function is as follows. Responsible for the proteolytic processing of the amyloid precursor protein (APP). Cleaves at the N-terminus of the A-beta peptide sequence, between residues 671 and 672 of APP, leads to the generation and extracellular release of beta-cleaved soluble APP, and a corresponding cell-associated C-terminal fragment which is later released by gamma-secretase. Cleaves CHL1. The sequence is that of Beta-secretase 1 from Homo sapiens (Human).